Consider the following 235-residue polypeptide: Putative cobalt transport protein CbiM 2 (235 aa).

Helical transmembrane passes span 9–29 (PAGW…MGII), 41–61 (YLPL…LKLP), 80–100 (FGYC…ALLL), 107–127 (TMGA…YAVY), 135–155 (INIY…TYII), 160–180 (LALA…AFFS), and 181–201 (IFAI…ALVF).

This sequence belongs to the CbiM family. In terms of assembly, forms an energy-coupling factor (ECF) transporter complex composed of an ATP-binding protein (A component, CbiO), a transmembrane protein (T component, CbiQ) and 2 possible substrate-capture proteins (S components, CbiM and CbiN) of unknown stoichimetry.

Its subcellular location is the cell membrane. The protein operates within cofactor biosynthesis; adenosylcobalamin biosynthesis. Its function is as follows. Part of the energy-coupling factor (ECF) transporter complex CbiMNOQ involved in cobalt import. In Methanosphaerula palustris (strain ATCC BAA-1556 / DSM 19958 / E1-9c), this protein is Putative cobalt transport protein CbiM 2.